The primary structure comprises 174 residues: Austinoid biosynthesis clusters protein H (174 aa).

Belongs to the trt14 isomerase family. Homodimer.

It participates in secondary metabolite biosynthesis; terpenoid biosynthesis. Functionally, part of the gene cluster B that mediates the biosynthesis of austinol and dehydroaustinol, two fungal meroterpenoids. The first step of the pathway is the synthesis of 3,5-dimethylorsellinic acid by the polyketide synthase ausA. 3,5-dimethylorsellinic acid is then prenylated by the polyprenyl transferase ausN. Further epoxidation by the FAD-dependent monooxygenase ausM and cyclization by the probable terpene cyclase ausL lead to the formation of protoaustinoid A. Protoaustinoid A is then oxidized to spiro-lactone preaustinoid A3 by the combined action of the FAD-binding monooxygenases ausB and ausC, and the dioxygenase ausE. Acid-catalyzed keto-rearrangement and ring contraction of the tetraketide portion of preaustinoid A3 by ausJ lead to the formation of preaustinoid A4. The aldo-keto reductase ausK, with the help of ausH, is involved in the next step by transforming preaustinoid A4 into isoaustinone which is in turn hydroxylated by the P450 monooxygenase ausI to form austinolide. Finally, the cytochrome P450 monooxygenase ausG modifies austinolide to austinol. Austinol can be further modified to dehydroaustinol which forms a diffusible complex with diorcinol that initiates conidiation. Due to genetic rearrangements of the clusters and the subsequent loss of some enzymes, the end products of the Emericella nidulans austinoid biosynthesis clusters are austinol and dehydroaustinol, even if additional enzymes, such as the O-acetyltransferase ausQ and the cytochrome P450 monooxygenase ausR are still functional. In Emericella nidulans (strain FGSC A4 / ATCC 38163 / CBS 112.46 / NRRL 194 / M139) (Aspergillus nidulans), this protein is Austinoid biosynthesis clusters protein H.